An 86-amino-acid chain; its full sequence is Small ribosomal subunit protein uS15 (86 aa).

The span at 1–10 shows a compositional bias: polar residues; sequence MSIDTQSIIE. The interval 1–21 is disordered; that stretch reads MSIDTQSIIENNKRSAHDTGS.

This sequence belongs to the universal ribosomal protein uS15 family. In terms of assembly, part of the 30S ribosomal subunit. Forms a bridge to the 50S subunit in the 70S ribosome, contacting the 23S rRNA.

Functionally, one of the primary rRNA binding proteins, it binds directly to 16S rRNA where it helps nucleate assembly of the platform of the 30S subunit by binding and bridging several RNA helices of the 16S rRNA. In terms of biological role, forms an intersubunit bridge (bridge B4) with the 23S rRNA of the 50S subunit in the ribosome. The sequence is that of Small ribosomal subunit protein uS15 from Xylella fastidiosa (strain M23).